A 434-amino-acid polypeptide reads, in one-letter code: Trigger factor (434 aa).

The region spanning 160–245 (GDKVKMNFVG…LTEVQAANLP (86 aa)) is the PPIase FKBP-type domain.

This sequence belongs to the FKBP-type PPIase family. Tig subfamily.

It localises to the cytoplasm. It catalyses the reaction [protein]-peptidylproline (omega=180) = [protein]-peptidylproline (omega=0). Its function is as follows. Involved in protein export. Acts as a chaperone by maintaining the newly synthesized protein in an open conformation. Functions as a peptidyl-prolyl cis-trans isomerase. The polypeptide is Trigger factor (Shewanella sp. (strain W3-18-1)).